The following is a 250-amino-acid chain: Probable transcriptional regulatory protein Nther_1800 (250 aa).

This sequence belongs to the TACO1 family.

The protein localises to the cytoplasm. The chain is Probable transcriptional regulatory protein Nther_1800 from Natranaerobius thermophilus (strain ATCC BAA-1301 / DSM 18059 / JW/NM-WN-LF).